The chain runs to 172 residues: Cystatin-like cysteine protease inhibitor EPIC4 (172 aa).

The N-terminal stretch at 1 to 17 (MRASLSILVAFPALAAA) is a signal peptide. Positions 71 to 75 (QVVAG) match the Secondary area of contact motif. Positions 129 to 172 (EAATASSSSTPAPTPASTSTSASSSEETMLQSSVQQRAMFSDFV) are disordered. The span at 130–156 (AATASSSSTPAPTPASTSTSASSSEET) shows a compositional bias: low complexity. Over residues 157–166 (MLQSSVQQRA) the composition is skewed to polar residues.

It belongs to the cystatin family.

Its subcellular location is the secreted. Functionally, secreted effector that interacts with and inhibits host apoplastic pathogenesis-related papain-like cysteine proteases. Inhibition of host proteases by a pathogen extracellular protease inhibitor forms a specific type of defense-counterdefense mechanism between plants and microbial pathogens. This Phytophthora infestans (Potato late blight agent) protein is Cystatin-like cysteine protease inhibitor EPIC4.